A 514-amino-acid polypeptide reads, in one-letter code: GMP synthase [glutamine-hydrolyzing] (514 aa).

One can recognise a Glutamine amidotransferase type-1 domain in the interval 7 to 197 (KVLILDFGSQ…LFNICKCERN (191 aa)). Residue C84 is the Nucleophile of the active site. Catalysis depends on residues H171 and E173. In terms of domain architecture, GMPS ATP-PPase spans 198–389 (WNMGSFIEYE…LKLPEDIVYR (192 aa)). 225 to 231 (SGGVDSS) contributes to the ATP binding site.

In terms of assembly, homodimer.

It carries out the reaction XMP + L-glutamine + ATP + H2O = GMP + L-glutamate + AMP + diphosphate + 2 H(+). Its pathway is purine metabolism; GMP biosynthesis; GMP from XMP (L-Gln route): step 1/1. Its function is as follows. Catalyzes the synthesis of GMP from XMP. This chain is GMP synthase [glutamine-hydrolyzing], found in Brachyspira hyodysenteriae (strain ATCC 49526 / WA1).